A 481-amino-acid chain; its full sequence is O-acetyltransferase andG (481 aa).

This sequence belongs to the fumigaclavine B O-acetyltransferase family. As to quaternary structure, monomer.

It participates in secondary metabolite biosynthesis; terpenoid biosynthesis. In terms of biological role, O-acetyltransferase; part of the gene cluster that mediates the biosynthesis of anditomin, a fungal meroterpenoid. The first step of the pathway is the synthesis of 3,5-dimethylorsellinic acid (DMOA) by the polyketide synthase andM. DMOA is then converted to the phthalide compound 5,7-dihydroxy-4,6-dimethylphthalide (DHDMP) by the cytochrome P450 monooxygenase andK, which is further prenylated by the prenyltransferase andD to yield farnesyl-DHDMP. Further epoxidation by the FAD-dependent monooxygenase andE leads to epoxyfarnesyl-DHDMP. The next step involves the terpene cyclase andB that converts epoxyfarnesyl-DHDMP into preandiloid A through opening of the epoxide ring followed by the cyclization of the farnesyl moiety. Preandiloid A is in turn oxidized at the C-3 hydroxyl group to yield preandiloid B by the dehydrogenase andC. The dioxygenase andA is solely responsible for the dehydrogenation of preandiloid B leading to the enone preandiloid C, as well as for the intriguing structural rearrangement to generate the bicyclo[2.2.2]octane core, transforming preandiloid C into andiconin. FAD-binding monooxygenase andJ then produces andilesin D which is reduced by dehydrogenase andI to yield andilesin A. Action of acetyltransferase andG followed by a spontaneous acetate elimination leads then to andilesin B, which is in turn substrate of the short chain dehydrogenase andH to yield andilesin C. Finally, the dioxygenase andF catalyzes the transformation of andilesin C to anditomin. The sequence is that of O-acetyltransferase andG from Emericella variicolor (Aspergillus stellatus).